Reading from the N-terminus, the 307-residue chain is Elongation factor Ts (307 aa).

The tract at residues 80 to 83 (TDFV) is involved in Mg(2+) ion dislocation from EF-Tu.

Belongs to the EF-Ts family.

It localises to the cytoplasm. Associates with the EF-Tu.GDP complex and induces the exchange of GDP to GTP. It remains bound to the aminoacyl-tRNA.EF-Tu.GTP complex up to the GTP hydrolysis stage on the ribosome. The sequence is that of Elongation factor Ts (tsf) from Zymomonas mobilis subsp. mobilis (strain ATCC 31821 / ZM4 / CP4).